Here is a 343-residue protein sequence, read N- to C-terminus: N-acetyl-gamma-glutamyl-phosphate reductase (343 aa).

Residue cysteine 147 is part of the active site.

This sequence belongs to the NAGSA dehydrogenase family. Type 1 subfamily.

The protein resides in the cytoplasm. The enzyme catalyses N-acetyl-L-glutamate 5-semialdehyde + phosphate + NADP(+) = N-acetyl-L-glutamyl 5-phosphate + NADPH + H(+). Its pathway is amino-acid biosynthesis; L-arginine biosynthesis; N(2)-acetyl-L-ornithine from L-glutamate: step 3/4. In terms of biological role, catalyzes the NADPH-dependent reduction of N-acetyl-5-glutamyl phosphate to yield N-acetyl-L-glutamate 5-semialdehyde. The sequence is that of N-acetyl-gamma-glutamyl-phosphate reductase from Staphylococcus aureus (strain MRSA252).